A 267-amino-acid polypeptide reads, in one-letter code: Hydroxynaphthalene reductase-like protein Arp2 (267 aa).

4 residues coordinate NADP(+): isoleucine 25, asparagine 45, aspartate 71, and asparagine 98. Residues serine 147 and serine 148 each act as proton donor in the active site. The NADP(+) site is built by tyrosine 162, lysine 166, valine 195, and threonine 197. The Proton acceptor role is filled by tyrosine 162. Lysine 166 functions as the Lowers pKa of active site Tyr in the catalytic mechanism.

Belongs to the short-chain dehydrogenases/reductases (SDR) family.

Hydroxynaphthalene reductase-like protein; part of the Pks2 gene cluster that mediates the formation of infectious structures (appressoria), enabling these fungi to kill insects faster. The product of the Pks2 gene cluster is different from the one of Pks1 and has still not been identified. The chain is Hydroxynaphthalene reductase-like protein Arp2 from Metarhizium anisopliae (strain ARSEF 549).